A 396-amino-acid chain; its full sequence is Phosphoglycerate kinase (396 aa).

Residues 22–24, Arg37, 60–63, Arg118, and Arg151 each bind substrate; these read DFN and HFGR. ATP-binding positions include Lys201, Glu322, and 352-355; that span reads GGDS.

Belongs to the phosphoglycerate kinase family. In terms of assembly, monomer.

The protein localises to the cytoplasm. It carries out the reaction (2R)-3-phosphoglycerate + ATP = (2R)-3-phospho-glyceroyl phosphate + ADP. It participates in carbohydrate degradation; glycolysis; pyruvate from D-glyceraldehyde 3-phosphate: step 2/5. This chain is Phosphoglycerate kinase, found in Wolbachia pipientis subsp. Culex pipiens (strain wPip).